The following is a 2166-amino-acid chain: Protein TIC236, chloroplastic (2166 aa).

The transit peptide at 1-37 (MSLRLQNPFLSTPLLHGSFNRREKRINVARRAFRSKR) directs the protein to the chloroplast. Residues 38–101 (IYSEKKQNDW…RSLAPVWEEG (64 aa)) are Stromal-facing. A helical membrane pass occupies residues 102–122 (LFFLRCSVFFAVISGVCLLVW). Residues 123 to 2166 (YGQNKARVFV…LFEYSATSQD (2044 aa)) lie on the Chloroplast intermembrane side of the membrane. The disordered stretch occupies residues 1611 to 1649 (MSEGEVSETDRGGAVKIPSWAKEKEDDEKRTSRDRSEER). The segment covering 1631–1649 (AKEKEDDEKRTSRDRSEER) has biased composition (basic and acidic residues).

Belongs to the TamB family. Part of the TIC complex, which can interact with components of the TOC complex to form a larger import complex. Interacts with the TOC complex component TOC75-3.

Its subcellular location is the plastid. It is found in the chloroplast inner membrane. The protein localises to the chloroplast intermembrane space. Functionally, part of the inner chloroplast membrane translocon complex (TIC) which associates with the outer chloroplast membrane translocon complex (TOC) and forms a supercomplex involved in protein precursor import into the chloroplast stroma. Required for the import of HSP93, TIC40 and RBCS protein precursors in the chloroplast stroma. Links the outer and inner membrane translocons of the chloroplast envelope. The polypeptide is Protein TIC236, chloroplastic (Arabidopsis thaliana (Mouse-ear cress)).